The primary structure comprises 1382 residues: Hepatocyte growth factor receptor (1382 aa).

A signal peptide spans 1-24; sequence MKSPAVLAPGILVFLFTFVQKSDG. Residues 25-933 lie on the Extracellular side of the membrane; the sequence is ECKEALVKSR…VIVQPDQNFT (909 aa). In terms of domain architecture, Sema spans 27 to 516; that stretch reads KEALVKSRMN…TGKKITKIPL (490 aa). N-linked (GlcNAc...) asparagine glycosylation occurs at N45. 4 cysteine pairs are disulfide-bonded: C95–C101, C98–C160, C133–C141, and C173–C176. Residue N106 is glycosylated (N-linked (GlcNAc...) asparagine). N-linked (GlcNAc...) asparagine glycosylation is present at N149. N203 and N359 each carry an N-linked (GlcNAc...) asparagine glycan. Disulfide bonds link C299–C364 and C386–C398. N-linked (GlcNAc...) asparagine glycosylation is found at N400 and N406. Cystine bridges form between C521–C539, C527–C562, C530–C546, and C542–C552. IPT/TIG domains follow at residues 564–656, 658–740, and 743–837; these read PAIY…FSYV, PIIT…FIYR, and PIVY…LIYV. O-linked (Man) threonine glycosylation occurs at T583. 2 N-linked (GlcNAc...) asparagine glycosylation sites follow: N608 and N636. O-linked (Man) threonine glycosylation is found at T677 and T762. N-linked (GlcNAc...) asparagine glycosylation is found at N786, N880, and N931. A helical transmembrane segment spans residues 934-956; the sequence is GLIVGVVSISIILLLLLGLFLWL. Topologically, residues 957–1382 are cytoplasmic; the sequence is KKRKQIKDLG…QDNVNGEGDT (426 aa). Residue S967 is modified to Phosphoserine. T978 carries the phosphothreonine modification. A phosphoserine mark is found at S991, S998, and S1001. The residue at position 1004 (Y1004) is a Phosphotyrosine. In terms of domain architecture, Protein kinase spans 1079-1346; the sequence is VHFNEVIGRG…RISAIFSTFI (268 aa). ATP-binding positions include 1085–1093 and K1111; that span reads IGRGHFGCV. The Proton acceptor role is filled by D1205. The segment at 1213-1382 is interaction with RANBP9; the sequence is LDEKFTVKVA…QDNVNGEGDT (170 aa). Y1231 is subject to Phosphotyrosine. Residues Y1235 and Y1236 each carry the phosphotyrosine; by autocatalysis modification. Position 1290 is a phosphothreonine (T1290). The interval 1321 to 1360 is interaction with MUC20; the sequence is WHPKAELRPSFSELVSRISAIFSTFIGEHYVHVNATYVNV. Phosphotyrosine; by autocatalysis is present on residues Y1350 and Y1357. Residue Y1366 is modified to Phosphotyrosine.

Belongs to the protein kinase superfamily. Tyr protein kinase family. As to quaternary structure, heterodimer made of an alpha chain (50 kDa) and a beta chain (145 kDa) which are disulfide linked. Binds PLXNB1. Interacts when phosphorylated with downstream effectors including STAT3, PIK3R1, SRC, PCLG1, GRB2 and GAB1. Interacts with SPSB1, SPSB2 and SPSB4. Interacts with INPP5D/SHIP1. When phosphorylated at Tyr-1357, interacts with INPPL1/SHIP2. Interacts with RANBP9 and RANBP10, as well as SPSB1, SPSB2, SPSB3 and SPSB4. SPSB1 binding occurs in the presence and in the absence of HGF, however HGF treatment has a positive effect on this interaction. Interacts with MUC20; prevents interaction with GRB2 and suppresses hepatocyte growth factor-induced cell proliferation. Interacts with GRB10. Interacts with PTPN1 and PTPN2. Interacts with HSP90AA1 and HSP90AB1; the interaction suppresses MET kinase activity. Interacts with tensin TNS3. Interacts (when phosphorylated) with tensin TNS4 (via SH2 domain); the interaction increases MET protein stability by inhibiting MET endocytosis and subsequent lysosomal degradation. In terms of processing, autophosphorylated in response to ligand binding on Tyr-1235 and Tyr-1236 in the kinase domain leading to further phosphorylation of Tyr-1350 and Tyr-1357 in the C-terminal multifunctional docking site. Dephosphorylated by PTPRJ at Tyr-1350 and Tyr-1366. Dephosphorylated by PTPN1 and PTPN2. Post-translationally, ubiquitinated. Ubiquitination by CBL regulates the receptor stability and activity through proteasomal degradation. O-mannosylation of IPT/TIG domains by TMEM260 is required for protein maturation. O-mannosylated residues are composed of single mannose glycans that are not elongated or modified.

The protein resides in the membrane. It carries out the reaction L-tyrosyl-[protein] + ATP = O-phospho-L-tyrosyl-[protein] + ADP + H(+). Its activity is regulated as follows. In its inactive state, the C-terminal tail interacts with the catalytic domain and inhibits the kinase activity. Upon ligand binding, the C-terminal tail is displaced and becomes phosphorylated, thus increasing the kinase activity. Functionally, receptor tyrosine kinase that transduces signals from the extracellular matrix into the cytoplasm by binding to hepatocyte growth factor/HGF ligand. Regulates many physiological processes including proliferation, scattering, morphogenesis and survival. Ligand binding at the cell surface induces autophosphorylation of MET on its intracellular domain that provides docking sites for downstream signaling molecules. Following activation by ligand, interacts with the PI3-kinase subunit PIK3R1, PLCG1, SRC, GRB2, STAT3 or the adapter GAB1. Recruitment of these downstream effectors by MET leads to the activation of several signaling cascades including the RAS-ERK, PI3 kinase-AKT, or PLCgamma-PKC. The RAS-ERK activation is associated with the morphogenetic effects while PI3K/AKT coordinates prosurvival effects. During embryonic development, MET signaling plays a role in gastrulation, development and migration of muscles and neuronal precursors, angiogenesis and kidney formation. In adults, participates in wound healing as well as organ regeneration and tissue remodeling. Also promotes differentiation and proliferation of hematopoietic cells. In Muntiacus muntjak (Barking deer), this protein is Hepatocyte growth factor receptor (MET).